The sequence spans 133 residues: Large ribosomal subunit protein bL17 (133 aa).

It belongs to the bacterial ribosomal protein bL17 family. Part of the 50S ribosomal subunit. Contacts protein L32.

This Alteromonas mediterranea (strain DSM 17117 / CIP 110805 / LMG 28347 / Deep ecotype) protein is Large ribosomal subunit protein bL17.